A 324-amino-acid polypeptide reads, in one-letter code: 4-hydroxy-3-methylbut-2-enyl diphosphate reductase (324 aa).

Cysteine 13 provides a ligand contact to [4Fe-4S] cluster. Residues histidine 41 and histidine 75 each contribute to the (2E)-4-hydroxy-3-methylbut-2-enyl diphosphate site. The dimethylallyl diphosphate site is built by histidine 41 and histidine 75. The isopentenyl diphosphate site is built by histidine 41 and histidine 75. Residue cysteine 97 coordinates [4Fe-4S] cluster. Histidine 125 contributes to the (2E)-4-hydroxy-3-methylbut-2-enyl diphosphate binding site. A dimethylallyl diphosphate-binding site is contributed by histidine 125. Histidine 125 serves as a coordination point for isopentenyl diphosphate. The active-site Proton donor is glutamate 127. Threonine 168 contacts (2E)-4-hydroxy-3-methylbut-2-enyl diphosphate. Cysteine 225 serves as a coordination point for [4Fe-4S] cluster. (2E)-4-hydroxy-3-methylbut-2-enyl diphosphate is bound by residues serine 253, serine 254, asparagine 255, and serine 302. Residues serine 253, serine 254, asparagine 255, and serine 302 each coordinate dimethylallyl diphosphate. Positions 253, 254, 255, and 302 each coordinate isopentenyl diphosphate.

This sequence belongs to the IspH family. It depends on [4Fe-4S] cluster as a cofactor.

The catalysed reaction is isopentenyl diphosphate + 2 oxidized [2Fe-2S]-[ferredoxin] + H2O = (2E)-4-hydroxy-3-methylbut-2-enyl diphosphate + 2 reduced [2Fe-2S]-[ferredoxin] + 2 H(+). It carries out the reaction dimethylallyl diphosphate + 2 oxidized [2Fe-2S]-[ferredoxin] + H2O = (2E)-4-hydroxy-3-methylbut-2-enyl diphosphate + 2 reduced [2Fe-2S]-[ferredoxin] + 2 H(+). It participates in isoprenoid biosynthesis; dimethylallyl diphosphate biosynthesis; dimethylallyl diphosphate from (2E)-4-hydroxy-3-methylbutenyl diphosphate: step 1/1. It functions in the pathway isoprenoid biosynthesis; isopentenyl diphosphate biosynthesis via DXP pathway; isopentenyl diphosphate from 1-deoxy-D-xylulose 5-phosphate: step 6/6. Its function is as follows. Catalyzes the conversion of 1-hydroxy-2-methyl-2-(E)-butenyl 4-diphosphate (HMBPP) into a mixture of isopentenyl diphosphate (IPP) and dimethylallyl diphosphate (DMAPP). Acts in the terminal step of the DOXP/MEP pathway for isoprenoid precursor biosynthesis. This Chlorobium limicola (strain DSM 245 / NBRC 103803 / 6330) protein is 4-hydroxy-3-methylbut-2-enyl diphosphate reductase.